Reading from the N-terminus, the 901-residue chain is HTH-type transcriptional regulator MalT (901 aa).

Residue serine 39–threonine 46 participates in ATP binding. Positions glutamate 829–leucine 894 constitute an HTH luxR-type domain. The H-T-H motif DNA-binding region spans asparagine 853–arginine 872.

It belongs to the MalT family. Monomer in solution. Oligomerizes to an active state in the presence of the positive effectors ATP and maltotriose.

Its activity is regulated as follows. Activated by ATP and maltotriose, which are both required for DNA binding. Functionally, positively regulates the transcription of the maltose regulon whose gene products are responsible for uptake and catabolism of malto-oligosaccharides. Specifically binds to the promoter region of its target genes, recognizing a short DNA motif called the MalT box. This is HTH-type transcriptional regulator MalT from Salmonella choleraesuis (strain SC-B67).